Here is a 359-residue protein sequence, read N- to C-terminus: CMP-N-acetylneuraminate-poly-alpha-2,8-sialyltransferase (359 aa).

Topologically, residues 1 to 7 are cytoplasmic; it reads MRSIRKR. A helical; Signal-anchor for type II membrane protein transmembrane segment spans residues 8-20; sequence WTICTISLLLIFY. The Lumenal portion of the chain corresponds to 21 to 359; the sequence is KTKEIARTEE…KLTTGKCMKQ (339 aa). Asn-50, Asn-74, and Asn-119 each carry an N-linked (GlcNAc...) asparagine glycan. Intrachain disulfides connect Cys-142–Cys-292 and Cys-156–Cys-356. Asn-147 and Asn-170 together coordinate CMP-N-acetyl-beta-neuraminate. Residues Asn-204 and Asn-219 are each glycosylated (N-linked (GlcNAc...) asparagine). Positions 279, 280, 281, and 301 each coordinate CMP-N-acetyl-beta-neuraminate. The Proton donor/acceptor role is filled by His-331.

The protein belongs to the glycosyltransferase 29 family. Post-translationally, autopolysialylated.

Its subcellular location is the golgi apparatus membrane. It localises to the secreted. The enzyme catalyses [N-acetyl-alpha-D-neuraminosyl-(2-&gt;8)](n) + CMP-N-acetyl-beta-neuraminate = [N-acetyl-alpha-D-neuraminosyl-(2-&gt;8)](n+1) + CMP + H(+). The protein operates within protein modification; protein glycosylation. Its function is as follows. Catalyzes the transfer of a sialic acid from a CMP-linked sialic acid donor onto a terminal alpha-2,3-, alpha-2,6-, or alpha-2,8-linked sialic acid of an N-linked glycan protein acceptor through alpha-2,8-linkages. Therefore, participates in polysialic acid synthesis on various sialylated N-acetyllactosaminyl oligosaccharides, including NCAM1 N-glycans, FETUB N-glycans and AHSG. It is noteworthy that alpha-2,3-linked sialic acid is apparently a better acceptor than alpha-2,6-linked sialic acid. The polypeptide is CMP-N-acetylneuraminate-poly-alpha-2,8-sialyltransferase (Cricetulus griseus (Chinese hamster)).